The following is a 736-amino-acid chain: Factor of DNA methylation 4 (736 aa).

Composition is skewed to basic and acidic residues over residues 80-90 (RKYLRPRERPR) and 144-167 (DSGRSGEERLKFSDKPDPFFSNED). Positions 80–167 (RKYLRPRERP…KPDPFFSNED (88 aa)) are disordered. Residues 360 to 597 (TLVSNLENTL…RSMRELTTRA (238 aa)) adopt a coiled-coil conformation.

In terms of biological role, acts in association with FDM3 and FDM5 for RNA-directed DNA methylation (RdDM). This chain is Factor of DNA methylation 4, found in Arabidopsis thaliana (Mouse-ear cress).